Reading from the N-terminus, the 579-residue chain is MFS-type transporter olcL (579 aa).

The segment covering 1–24 (MANIGGSNAVSSAQGSQISDSPTT) has biased composition (polar residues). Positions 1 to 75 (MANIGGSNAV…GFGEDGCQSD (75 aa)) are disordered. Positions 25 to 35 (VDDRLDEHKET) are enriched in basic and acidic residues. Positions 36 to 54 (STQSIDHSENITQSPTSLQ) are enriched in polar residues. Asparagine 45 carries N-linked (GlcNAc...) asparagine glycosylation. Transmembrane regions (helical) follow at residues 85–105 (LAAI…DNTI), 121–141 (GDVG…TLVF), 159–179 (AVFE…GLII), 183–203 (IAGL…SQSV), 214–234 (LVGG…GAFT), 241–261 (WCFY…LLFF), 282–302 (LIGL…LQWG), 310–330 (SGRI…FIMV), and 355–375 (LFNF…PVWF). An N-linked (GlcNAc...) asparagine glycan is attached at asparagine 380. The next 5 membrane-spanning stretches (helical) occupy residues 388–408 (LMNL…GYGV), 411–431 (IGYY…GAGL), 439–459 (FGPS…GLGL), 479–501 (IAIV…QNVF), and 553–573 (FYVG…IQWI).

It belongs to the major facilitator superfamily. TCR/Tet family.

It localises to the peroxisome membrane. Its function is as follows. MFS-type transporter; part of the gene cluster that mediates the biosynthesis of 15-deoxyoxalicine B. The first step of the pathway is the synthesis of nicotinyl-CoA from nicotinic acid by the nicotinic acid-CoA ligase olcI. Nicotinyl-CoA is then a substrate of polyketide synthase olcA to produce 4-hydroxy-6-(3-pyridinyl)-2H-pyran-2-one (HPPO) which is further prenylated by the polyprenyl transferase olcH to yield geranylgeranyl-HPPO. Geranylgeranyl pyrophosphate is provided by the cluster-specific geranylgeranyl pyrophosphate synthase olcC. The FAD-dependent monooxygenase olcE catalyzes the epoxidation of geranylgeranyl-HPPO and the terpene cyclase olcD catalyzes the cyclization of the terpenoid component, resulting in the formation of the tricyclic terpene moiety seen in predecaturin E. The cytochrome P450 monooxygenase then catalyzes the allylic oxidation of predecaturin E, which is followed by spirocylization with concomitant loss of one molecule of water to form decaturin E. Decaturin E is the substrate of the cytochrome P450 monooxygenase olcJ which hydroxylates it at the C-29 position to form decaturin F. The short-chain dehydrogenase/reductase olcF may catalyze the oxidation of decaturin F to generate the 29-hydroxyl-27-one intermediate, and subsequent hemiacetal formation probably leads to the formation of decaturin C. The dioxygenase olcK may be a peroxisomal enzyme that catalyzes the hydroxylation of decaturin C into decaturin A once decaturin C is shuttled into the peroxisome by the MFS transporter olcL. Finally the cytochrome P450 monooxygenase olcB catalyzes the oxidative rearrangement to yield 15-deoxyoxalicine B. In the absence of olcJ, decaturin E may be shunted to a pathway in which it is oxidized to a ketone, possibly by olcF, to form decaturin D, which undergoes further allylic oxidation to yield decaturin G. Moreover, in the absence of oclK or oclL, oclB can convert decaturin C into 15-deoxyoxalicine A. The protein is MFS-type transporter olcL of Penicillium canescens.